We begin with the raw amino-acid sequence, 267 residues long: MNALLSNPFKEGLREGDTQIGLWLSSTTSYMAEIAATSGYDWLLIDGEHAPNTVQDLYHQLQAIAPYASQPVIRLIEGSKALIKQVLDIGAQTLLIPMVDTAEQARQVVSATRYPPLGQRGVGASVARAARWGRIDNYMAQANESLCLLVQVESKVALENLDAILEVEGIDGVFIGPADLSASLGYPDNAGHPEVQRIIESCIYRIRAAGKAAGFLAVDPAMAQKCLAWGANFVAVGVDTMLYTEALDSRLAMFKSVQSVSTAKRSY.

The Proton acceptor role is filled by His49. Residue Gln151 coordinates substrate. Glu153 is a Mg(2+) binding site. Substrate contacts are provided by Ala178 and Asp179. Asp179 lines the Mg(2+) pocket.

Belongs to the HpcH/HpaI aldolase family. KDR aldolase subfamily. Homohexamer. Mg(2+) serves as cofactor.

The enzyme catalyses 2-dehydro-3-deoxy-L-rhamnonate = (S)-lactaldehyde + pyruvate. Catalyzes the reversible retro-aldol cleavage of 2-keto-3-deoxy-L-rhamnonate (KDR) to pyruvate and lactaldehyde. This chain is 2-keto-3-deoxy-L-rhamnonate aldolase, found in Salmonella gallinarum (strain 287/91 / NCTC 13346).